Here is an 895-residue protein sequence, read N- to C-terminus: Transcription factor SWI6 (895 aa).

Positions 1–45 are enriched in polar residues; it reads MASTVAGNSFVSQQHPGNLHSANLQSQSQGFRRQNSTSSVPSTAS. The interval 1–107 is disordered; the sequence is MASTVAGNSF…SDQNVPQQPQ (107 aa). A compositionally biased stretch (low complexity) spans 64–100; the sequence is MSSQQSQPPASQQSFSMSQTGSQPQPSQSSFRSYSDQ. One can recognise an HTH APSES-type domain in the interval 112–219; that stretch reads IYTAVYSNVE…NRNPDGSVSQ (108 aa). The segment at residues 143-164 is a DNA-binding region (H-T-H motif); the sequence is ATQILKVAGVEKGKRTKILEKE. Disordered stretches follow at residues 272–293 and 323–358; these read ARFD…SFQR and NMAF…NSFG. ANK repeat units lie at residues 458–488 and 607–636; these read QCHT…PFRV and AGDT…SPHI. The tract at residues 653-684 is disordered; it reads SDGAMKTKGDSGGDVENGDVGGSSQKSNESSN. Residues 674–684 show a composition bias toward polar residues; it reads GSSQKSNESSN. A coiled-coil region spans residues 698-759; it reads SANFQEEIKN…VTNLQRAEER (62 aa).

The protein resides in the nucleus. Its function is as follows. Transcription factor that plays a role downstream of the MCK1-MKK2-MPS1 cascade. Required for hyphal morphogenesis and pathogenicity. Is an important oxidative stress response regulator and plays a positive role in the regulation of extracellular peroxidases. In Pyricularia oryzae (strain 70-15 / ATCC MYA-4617 / FGSC 8958) (Rice blast fungus), this protein is Transcription factor SWI6.